The primary structure comprises 188 residues: Large ribosomal subunit protein eL18 (188 aa).

Positions 143–188 (RSAREAEKHFGPAPGVPHSHTKPHVRSKGRKFERARGRRASRAYKN) are disordered. Composition is skewed to basic residues over residues 161–171 (SHTKPHVRSKG) and 178–188 (RGRRASRAYKN).

Belongs to the eukaryotic ribosomal protein eL18 family.

It localises to the cytoplasm. This Caenorhabditis briggsae protein is Large ribosomal subunit protein eL18 (rpl-18).